Here is a 256-residue protein sequence, read N- to C-terminus: 3-methyl-2-oxobutanoate hydroxymethyltransferase (256 aa).

Mg(2+)-binding residues include aspartate 42 and aspartate 86. 3-methyl-2-oxobutanoate contacts are provided by residues aspartate 42–serine 43, aspartate 86, and lysine 116. Glutamate 118 is a Mg(2+) binding site. The Proton acceptor role is filled by glutamate 185.

This sequence belongs to the PanB family. Homodecamer; pentamer of dimers. Requires Mg(2+) as cofactor.

The protein resides in the cytoplasm. It carries out the reaction 3-methyl-2-oxobutanoate + (6R)-5,10-methylene-5,6,7,8-tetrahydrofolate + H2O = 2-dehydropantoate + (6S)-5,6,7,8-tetrahydrofolate. The protein operates within cofactor biosynthesis; (R)-pantothenate biosynthesis; (R)-pantoate from 3-methyl-2-oxobutanoate: step 1/2. Its function is as follows. Catalyzes the reversible reaction in which hydroxymethyl group from 5,10-methylenetetrahydrofolate is transferred onto alpha-ketoisovalerate to form ketopantoate. The sequence is that of 3-methyl-2-oxobutanoate hydroxymethyltransferase from Prochlorococcus marinus (strain SARG / CCMP1375 / SS120).